Consider the following 182-residue polypeptide: Gas vesicle protein H1 (182 aa).

Residues 1 to 11 are compositionally biased toward acidic residues; sequence MVPDENDDASD. Disordered stretches follow at residues 1–21 and 65–106; these read MVPD…SGLL and GRAD…GGTS. Residues 12–21 show a composition bias toward low complexity; the sequence is DQSSQLSGLL. Over residues 92-101 the composition is skewed to basic and acidic residues; sequence TTEDSIHVET.

Belongs to the gas vesicle GvpH family. GvpF to GvpM interact with each other in vitro, and may form multi-subunit complex(es). Interacts with GvpC1. Might interact with GvpA1.

Its subcellular location is the cytoplasm. It localises to the gas vesicle. In terms of biological role, proteins GvpF to GvpM might be involved in nucleating gas vesicle formation. May be important for the stability of gas vesicles. Gas vesicles are hollow, gas filled proteinaceous nanostructures found in several microbial planktonic microorganisms. They allow positioning of halobacteria at the optimal depth for growth in the poorly aerated, shallow brine pools of their habitat. Functionally, expression of a 9.5 kb p-vac DNA fragment containing 2 divergently transcribed regions (gvpD-gvpE-gvpF-gvpG-gvpH-gvpI-gvpJ-gvpK-gvpL-gvpM and gvpA-gvpC-gvpN-gvpO) allows H.volcanii to produce gas vesicles. A similar region restores gas vesicle production in H.halobium without the p-vac locus, but it still has the c-vac locus. This Halobacterium salinarum (strain ATCC 700922 / JCM 11081 / NRC-1) (Halobacterium halobium) protein is Gas vesicle protein H1 (gvpH11).